The chain runs to 240 residues: Probable phosphatase Athe_0620 (240 aa).

Residues H8, H10, H16, H41, E74, H102, H132, D192, and H194 each contribute to the Zn(2+) site.

This sequence belongs to the PHP family. The cofactor is Zn(2+).

This is Probable phosphatase Athe_0620 from Caldicellulosiruptor bescii (strain ATCC BAA-1888 / DSM 6725 / KCTC 15123 / Z-1320) (Anaerocellum thermophilum).